We begin with the raw amino-acid sequence, 215 residues long: Wtf element wtf7 (215 aa).

Residues 1 to 21 (MSGSYAPIEDSADELSVHSGN) are disordered. Transmembrane regions (helical) follow at residues 119 to 139 (LAQS…CLFF), 149 to 169 (LMGW…SFIL), and 189 to 209 (LILF…YALY).

Belongs to the WTF family.

It localises to the spore membrane. Its function is as follows. May act in meiotic drive. The protein is Wtf element wtf7 of Schizosaccharomyces pombe (strain 972 / ATCC 24843) (Fission yeast).